A 188-amino-acid chain; its full sequence is RWD domain-containing protein 4 (188 aa).

Ser2 carries the N-acetylserine modification. In terms of domain architecture, RWD spans 9 to 111; sequence MELEALRSIY…EYAKDNKEQF (103 aa). Positions 132-167 are disordered; sequence TPNTAPSSKKKDKKEQLSKAQKRKLADKTDHKGELP. The segment covering 155 to 166 has biased composition (basic and acidic residues); that stretch reads KLADKTDHKGEL.

The protein is RWD domain-containing protein 4 (RWDD4) of Homo sapiens (Human).